The sequence spans 265 residues: Expansin-like A1 (265 aa).

A signal peptide spans 1 to 20 (MGSFLFLIVVIFLFSSSVNA). The Expansin-like EG45 domain maps to 41-147 (SGACAYGSMA…QRVPCDYGNK (107 aa)). A helical transmembrane segment spans residues 42 to 62 (GACAYGSMATSFFAGHIAAAI). 2 N-linked (GlcNAc...) asparagine glycosylation sites follow: Asn99 and Asn102. In terms of domain architecture, Expansin-like CBD spans 161–244 (NYLEIKLLYQ…NWEAGKIYDA (84 aa)).

Belongs to the expansin family. Expansin-like A subfamily.

The protein localises to the membrane. The sequence is that of Expansin-like A1 (EXLA1) from Arabidopsis thaliana (Mouse-ear cress).